Reading from the N-terminus, the 352-residue chain is UPF0324 membrane protein BCE_5279 (352 aa).

10 helical membrane passes run 25 to 47 (FGFS…LAEL), 52 to 71 (IMGQ…AAIG), 111 to 130 (VLVI…YGLT), 140 to 162 (GILT…APQV), 169 to 191 (TAVG…TLLY), 201 to 223 (YGVF…APGG), 230 to 252 (AVIV…GLWF), 267 to 289 (LPIP…GIIP), 291 to 313 (VVAG…GLGL), and 328 to 350 (FVAG…YALG).

This sequence belongs to the UPF0324 family.

It is found in the cell membrane. This is UPF0324 membrane protein BCE_5279 from Bacillus cereus (strain ATCC 10987 / NRS 248).